The primary structure comprises 492 residues: Heat shock factor protein 4 (492 aa).

A DNA-binding region spans residues 17–122; that stretch reads VPAFLGKLWA…LLERVRRKVP (106 aa). The interval 129 to 203 is hydrophobic repeat HR-A/B; sequence SRWRPEDLSR…GPLQTGPSST (75 aa). The tract at residues 245–322 is interactions with DUSP26, MAPK1 and MAPK2; that stretch reads LPETTLGLSP…ECDFCVTAPP (78 aa). The interval 263–282 is disordered; it reads SDIPEDSPSPEGHRLSPSGG. Lysine 293 participates in a covalent cross-link: Glycyl lysine isopeptide (Lys-Gly) (interchain with G-Cter in SUMO). Serine 298 carries the post-translational modification Phosphoserine. A disordered region spans residues 337-378; the sequence is GSYSPEGPRSVQQPEPRGPREVPDRGTLGLDRGNRSPESLLP. The tract at residues 364–389 is hydrophobic repeat HR-C; it reads LGLDRGNRSPESLLPPMLLRPAPETL.

This sequence belongs to the HSF family. As to quaternary structure, homotrimer. Exhibits constitutive DNA binding and forms trimers even in the absence of stress. Interacts with ALKBH4, DUSP26, MAPK1, MAPK2, MAPK8 and MAP kinase p38. Post-translationally, phosphorylated mainly on serine residues. Phosphorylation on Ser-298 promotes sumoylation on Lys-293. In terms of processing, isoform HSF4B is constitutively sumoylated. Sumoylation represses the transcriptional activity and is promoted by phosphorylation on Ser-298. HSFA is not sumoylated. In terms of tissue distribution, preferentially expressed in brain and lung. Also found in the eye. Slightly detected in liver and skeletal muscle. Isoform B is the major species in various tissues.

The protein localises to the nucleus. Heat-shock transcription factor that specifically binds heat shock promoter elements (HSE). Required for denucleation and organelle rupture and degradation that occur during eye lens terminal differentiation, when fiber cells that compose the lens degrade all membrane-bound organelles in order to provide lens with transparency to allow the passage of light. In this process, may regulate denucleation of lens fiber cells in part by activating DNASE2B transcription. May be involved in DNA repair through the transcriptional regulation of RAD51. May up-regulate p53/TP53 protein in eye lens fiber cells, possibly through protein stabilization. In the eye lens, controls the expression of alpha-crystallin B chain/CRYAB and consequently may be involved in the regulation of lysosomal acidification. Its function is as follows. Transcriptional repressor. In terms of biological role, transcriptional activator. The sequence is that of Heat shock factor protein 4 (Hsf4) from Mus musculus (Mouse).